Here is a 72-residue protein sequence, read N- to C-terminus: DNA-directed RNA polymerase subunit epsilon (72 aa).

It belongs to the RNA polymerase subunit epsilon family. As to quaternary structure, RNAP is composed of a core of 2 alpha, a beta and a beta' subunit. The core is associated with a delta subunit, and at least one of epsilon or omega. When a sigma factor is associated with the core the holoenzyme is formed, which can initiate transcription.

The catalysed reaction is RNA(n) + a ribonucleoside 5'-triphosphate = RNA(n+1) + diphosphate. A non-essential component of RNA polymerase (RNAP). This is DNA-directed RNA polymerase subunit epsilon from Lactiplantibacillus plantarum (strain ATCC BAA-793 / NCIMB 8826 / WCFS1) (Lactobacillus plantarum).